We begin with the raw amino-acid sequence, 93 residues long: Aspartyl/glutamyl-tRNA(Asn/Gln) amidotransferase subunit C (93 aa).

This sequence belongs to the GatC family. Heterotrimer of A, B and C subunits.

It catalyses the reaction L-glutamyl-tRNA(Gln) + L-glutamine + ATP + H2O = L-glutaminyl-tRNA(Gln) + L-glutamate + ADP + phosphate + H(+). It carries out the reaction L-aspartyl-tRNA(Asn) + L-glutamine + ATP + H2O = L-asparaginyl-tRNA(Asn) + L-glutamate + ADP + phosphate + 2 H(+). Functionally, allows the formation of correctly charged Asn-tRNA(Asn) or Gln-tRNA(Gln) through the transamidation of misacylated Asp-tRNA(Asn) or Glu-tRNA(Gln) in organisms which lack either or both of asparaginyl-tRNA or glutaminyl-tRNA synthetases. The reaction takes place in the presence of glutamine and ATP through an activated phospho-Asp-tRNA(Asn) or phospho-Glu-tRNA(Gln). This is Aspartyl/glutamyl-tRNA(Asn/Gln) amidotransferase subunit C from Methanocella arvoryzae (strain DSM 22066 / NBRC 105507 / MRE50).